Consider the following 427-residue polypeptide: Enolase (427 aa).

Gln163 contributes to the (2R)-2-phosphoglycerate binding site. Glu205 functions as the Proton donor in the catalytic mechanism. Mg(2+) contacts are provided by Asp242, Glu288, and Asp315. (2R)-2-phosphoglycerate contacts are provided by Lys340, Arg369, Ser370, and Lys391. Residue Lys340 is the Proton acceptor of the active site.

The protein belongs to the enolase family. The cofactor is Mg(2+).

It localises to the cytoplasm. The protein resides in the secreted. Its subcellular location is the cell surface. The enzyme catalyses (2R)-2-phosphoglycerate = phosphoenolpyruvate + H2O. It functions in the pathway carbohydrate degradation; glycolysis; pyruvate from D-glyceraldehyde 3-phosphate: step 4/5. Functionally, catalyzes the reversible conversion of 2-phosphoglycerate (2-PG) into phosphoenolpyruvate (PEP). It is essential for the degradation of carbohydrates via glycolysis. The polypeptide is Enolase (Cytophaga hutchinsonii (strain ATCC 33406 / DSM 1761 / CIP 103989 / NBRC 15051 / NCIMB 9469 / D465)).